A 376-amino-acid polypeptide reads, in one-letter code: ORC1-type DNA replication protein 2 (376 aa).

ATP-binding positions include 73–77, Y209, and R221; that span reads TGKTS.

This sequence belongs to the CDC6/cdc18 family.

In terms of biological role, involved in regulation of DNA replication. This is ORC1-type DNA replication protein 2 (cdc6-2) from Archaeoglobus fulgidus (strain ATCC 49558 / DSM 4304 / JCM 9628 / NBRC 100126 / VC-16).